A 260-amino-acid polypeptide reads, in one-letter code: tRNA pseudouridine synthase B (260 aa).

Residue His-44 coordinates substrate. The active-site Nucleophile is Asp-49. Positions 77, 180, and 201 each coordinate substrate.

Belongs to the pseudouridine synthase TruB family. Type 1 subfamily.

The enzyme catalyses uridine(55) in tRNA = pseudouridine(55) in tRNA. In terms of biological role, responsible for synthesis of pseudouridine from uracil-55 in the psi GC loop of transfer RNAs. The sequence is that of tRNA pseudouridine synthase B from Blochmanniella pennsylvanica (strain BPEN).